A 257-amino-acid polypeptide reads, in one-letter code: Protein IMPACT homolog (257 aa).

One can recognise an RWD domain in the interval 9–102 (AEIESLASIF…SLVQDFIRDL (94 aa)).

This sequence belongs to the IMPACT family. In terms of assembly, interacts with gcn-1; prevents the interaction of gcn-1 with gcn-2 and inhibits gcn-2 kinase activity. Interaction with rpl-39; this interaction occurs in a gcn-1-independent manner. Associates with ribosomes; this interaction occurs in a gcn-1-independent manner. Associates with actin; this interaction occurs in a gcn-1-independent manner.

Its subcellular location is the cytoplasm. In terms of biological role, translational regulator that ensures constant high levels of translation under amino acid starvation. Plays a role as a negative regulator of the gcn-2 kinase activity; impairs gcn-1-mediated gcn-2 activation, and hence gcn-2-mediated eIF-2-alpha phosphorylation and subsequent down-regulation of protein synthesis in amino acid-starved cells. Plays a role in differentiation of neuronal cells by stimulating neurite outgrowth. In Caenorhabditis elegans, this protein is Protein IMPACT homolog.